Reading from the N-terminus, the 302-residue chain is Giardin subunit alpha-5 (302 aa).

Annexin repeat units follow at residues 1 to 72 (MTST…VNMW), 74 to 144 (SRHE…VAGW), 153 to 226 (GSVE…AAHF), and 230 to 298 (GLPV…TLWR).

It belongs to the annexin family. Giardin subunit alpha subfamily.

It localises to the cytoplasm. It is found in the cytoskeleton. Its function is as follows. Giardins are involved in parasite attachment to the intestinal mucosa and in the cytoskeletal disassembly and reassembly that marks the transition from infectious trophozoite to transmissible cyst. They may interact with other cytoskeletal proteins such as microtubules in the microribbons or crossbridges, to maintain the integrity of the ventral disk. The sequence is that of Giardin subunit alpha-5 from Giardia intestinalis (Giardia lamblia).